Consider the following 710-residue polypeptide: Solute carrier organic anion transporter family member 3A1 (710 aa).

M1 carries the post-translational modification N-acetylmethionine. Positions 1-15 (MQGKKPGGSSGGGRS) are enriched in gly residues. The interval 1–25 (MQGKKPGGSSGGGRSGELQGDEAQR) is disordered. Residues 1 to 40 (MQGKKPGGSSGGGRSGELQGDEAQRNKKKKKKVSCFSNIK) lie on the Cytoplasmic side of the membrane. A helical transmembrane segment spans residues 41-60 (IFLVSECALMLAQGTVGAYL). Over 61–79 (VSVLTTLERRFNLQSADVG) the chain is Extracellular. Residues 80-100 (VIASSFEIGNLALILFVSYFG) form a helical membrane-spanning segment. Residues 101–106 (ARGHRP) lie on the Cytoplasmic side of the membrane. A helical membrane pass occupies residues 107–131 (RLIGCGGIVMALGALLSALPEFLTH). The Extracellular segment spans residues 132–174 (QYKYEAGEIRWGAEGRDVCAANGSGGDEGPDPDLICRNRTATN). N153 and N169 each carry an N-linked (GlcNAc...) asparagine glycan. A helical membrane pass occupies residues 175 to 203 (MMYLLLIGAQVLLGIGATPVQPLGVSYID). Over 204–222 (DHVRRKDSSLYIGILFTML) the chain is Cytoplasmic. Residues 223–243 (VFGPACGFILGSFCTKIYVDA) traverse the membrane as a helical segment. The Extracellular segment spans residues 244 to 261 (VFIDTSNLDITPDDPRWI). Residues 262–286 (GAWWGGFLLCGALLFFSSLLMFGFP) traverse the membrane as a helical segment. Over 287–344 (QSLPPHSEPAMESEQAMLSEREYERPKPSNGVLRHPLEPDSSASCFQQLRVIPKVTKH) the chain is Cytoplasmic. A helical transmembrane segment spans residues 345–366 (LLSNPVFTCIILAACMEIAVVA). The Extracellular portion of the chain corresponds to 367–386 (GFAAFLGKYLEQQFNLTTSS). An N-linked (GlcNAc...) asparagine glycan is attached at N381. Residues 387–410 (ANQLLGMTAIPCACLGIFLGGLLV) form a helical membrane-spanning segment. The Cytoplasmic segment spans residues 411-414 (KKLS). The helical transmembrane segment at 415–438 (LSALGAIRMAMLVNLVSTACYVSF) threads the bilayer. The Extracellular portion of the chain corresponds to 439–539 (LFLGCDTGPV…PGCQEAFLTF (101 aa)). N-linked (GlcNAc...) asparagine glycosylation is present at N457. Residues 465–513 (LDPYSPCNNNCECQTDSFTPVCGADGITYLSACFAGCNSTNLTGCACLT) enclose the Kazal-like domain. 3 cysteine pairs are disulfide-bonded: C471–C501, C477–C497, and C486–C511. Residues N502, N505, and N519 are each glycosylated (N-linked (GlcNAc...) asparagine). A helical membrane pass occupies residues 540–562 (LCVMCICSLIGAMAQTPSVIILI). Residues 563-571 (RTVSPELKS) are Cytoplasmic-facing. Residues 572-597 (YALGVLFLLLRLLGFIPPPLIFGAGI) traverse the membrane as a helical segment. Over 598–630 (DSTCLFWSTFCGEQGACVLYDNVVYRYLYVSIA) the chain is Extracellular. A helical transmembrane segment spans residues 631–648 (IALKSFAFILYTTTWQCL). The Cytoplasmic portion of the chain corresponds to 649–705 (RKNYKRYIKNHEGGLSTSEFFASTLTLDNLGRDPVPANQTHRTKFIYNLEDHEWCEN).

Belongs to the organo anion transporter (TC 2.A.60) family. As to expression, generally the expression of isoform 1 is higher than that of isoform 2. Expressed in placental trophoblasts. Expressed in pancreas, kidney, liver, lung, brain, heart, cerebellum, peripheral blood leukocyte, colon, small intestine, ovary, testis, prostate, thyroid, thymus and spleen. Expressed in fetal brain, heart, kidney, liver, lung, skeletal muscle, spleen and pancreas. In testis, detected in spermatogonia at different stages and absent from Sertoli cells. Expressed in the choroid plexus epithelium, at the basolateral membrane. In brain, also very abundant in the gray matter of the frontal cortex, but not associated with neuronal cell bodies. Not detected in the white matter. In terms of tissue distribution, expressed in heart, brain, cerebellum, testis, lung, thyroid, spoleen and liver. In testis, primarily localized to the basal membrane of Sertoli cells and weakly expressed within the tubules. In testis, also present in spermatogonia at different stages. In brain, expressed in the choroid plexus epithelium, at the apical membrane as well as in the subapical intracellular vesicular compartments. In brain, also associated with neuronal bodies and axons in both the gray and the white matters of the frontal cortex.

It localises to the basolateral cell membrane. The protein resides in the apical cell membrane. Its subcellular location is the basal cell membrane. The catalysed reaction is L-thyroxine(out) = L-thyroxine(in). The enzyme catalyses prostaglandin E1(out) = prostaglandin E1(in). It catalyses the reaction prostaglandin E2(out) = prostaglandin E2(in). It carries out the reaction prostaglandin F2alpha(out) = prostaglandin F2alpha(in). The catalysed reaction is (5Z,8Z,11Z,14Z)-eicosatetraenoate(out) = (5Z,8Z,11Z,14Z)-eicosatetraenoate(in). The enzyme catalyses taurocholate(out) = taurocholate(in). It catalyses the reaction glycocholate(out) = glycocholate(in). It carries out the reaction estrone 3-sulfate(out) = estrone 3-sulfate(in). The catalysed reaction is argipressin(out) = argipressin(in). Its activity is regulated as follows. Stimulated by extracellular acidic pH. Putative organic anion antiporter with apparent broad substrate specificity. Recognizes various substrates including thyroid hormone L-thyroxine, prostanoids such as prostaglandin E1 and E2, bile acids such as taurocholate, glycolate and glycochenodeoxycholate and peptide hormones such as L-arginine vasopressin, likely operating in a tissue-specific manner. The transport mechanism, its electrogenicity and potential tissue-specific counterions remain to be elucidated. The polypeptide is Solute carrier organic anion transporter family member 3A1 (SLCO3A1) (Homo sapiens (Human)).